A 638-amino-acid chain; its full sequence is RAF proto-oncogene serine/threonine-protein kinase (638 aa).

Phosphoserine is present on S43. The 75-residue stretch at S56–L130 folds into the RBD domain. The segment at T137–C183 adopts a Phorbol-ester/DAG-type zinc-finger fold. The Zn(2+) site is built by H138, C151, C154, C164, C167, H172, C175, and C183. S257 carries the phosphoserine modification. A Phosphothreonine; by autocatalysis modification is found at T266. The interval L279–A323 is disordered. Residues E284–S297 show a composition bias toward polar residues. A Phosphoserine modification is found at S329. Residues V340 to L600 enclose the Protein kinase domain. Residues I346–V354 and K366 each bind ATP. D459 functions as the Proton acceptor in the catalytic mechanism. S490 is subject to Phosphoserine.

The protein belongs to the protein kinase superfamily. TKL Ser/Thr protein kinase family. RAF subfamily. Requires Zn(2+) as cofactor. In terms of processing, phosphorylation at Ser-257 inactivates kinase activity. Dephosphorylation of Ser-257 by a complex containing protein phosphatase 1 relieves inactivation, leading to stimulate RAF1 activity.

It localises to the cytoplasm. The protein resides in the cell membrane. It carries out the reaction L-seryl-[protein] + ATP = O-phospho-L-seryl-[protein] + ADP + H(+). The catalysed reaction is L-threonyl-[protein] + ATP = O-phospho-L-threonyl-[protein] + ADP + H(+). In terms of biological role, serine/threonine-protein kinase that acts as a regulatory link between the membrane-associated Ras GTPases and the MAPK/ERK cascade, and this critical regulatory link functions as a switch determining cell fate decisions. RAF1 activation initiates a mitogen-activated protein kinase (MAPK) cascade that comprises a sequential phosphorylation of the dual-specific MAPK kinases (MAP2K1/MEK1 and MAP2K2/MEK2) and the extracellular signal-regulated kinases (MAPK3/ERK1 and MAPK1/ERK2). The polypeptide is RAF proto-oncogene serine/threonine-protein kinase (raf1) (Xenopus laevis (African clawed frog)).